A 1448-amino-acid chain; its full sequence is Gag-Pol polyprotein (1448 aa).

Gly-2 carries the N-myristoyl glycine; by host lipid modification. The Nuclear export signal motif lies at 16–22; that stretch reads LEKIRLR. A Nuclear localization signal motif is present at residues 26 to 32; it reads KKKYMLK. The segment covering 218–227 has biased composition (low complexity); it reads HPQQAPQQGQ. Positions 218–237 are disordered; that stretch reads HPQQAPQQGQLREPSGSDIA. CCHC-type zinc fingers lie at residues 391-408 and 412-429; these read IKCW…QCRA and QGCW…KCPN. The segment at 440–461 is disordered; sequence LGKEAPQFPHGSSASGADANCS. The Peptidase A2 domain maps to 517–586; the sequence is VEVLLDTGAD…TPINIFGRNL (70 aa). Catalysis depends on Asp-522, which acts as the For protease activity; shared with dimeric partner. The Reverse transcriptase domain maps to 640–830; that stretch reads DGQLEEAPPT…PPFQWMGYEL (191 aa). Residues Asp-706, Asp-781, and Asp-782 each coordinate Mg(2+). Residues 823 to 831 are RT 'primer grip'; sequence FQWMGYELW. A Tryptophan repeat motif motif is present at residues 993 to 1009; sequence WEQWWTDYWQVTWIPEW. Residues 1029-1152 form the RNase H type-1 domain; sequence IEGEETYYVD…IDHLVSQGIR (124 aa). 4 residues coordinate Mg(2+): Asp-1038, Glu-1073, Asp-1093, and Asp-1144. The Integrase-type zinc finger occupies 1158–1199; the sequence is EKIEPAQEEHSKYHSNIKELVFKFGLPRLVAKQIVDTCDKCH. Zn(2+) is bound by residues His-1167, His-1171, Cys-1195, and Cys-1198. An Integrase catalytic domain is found at 1209–1359; sequence VNSDLGTWQM…TPAERLINMI (151 aa). Asp-1219 and Asp-1271 together coordinate Mg(2+). Positions 1378–1425 form a DNA-binding region, integrase-type; the sequence is FRVYYREGRDQLWKGPGELLWKGEGAVILKVGTDIKVVPRRKAKIIKD. The disordered stretch occupies residues 1426-1448; the sequence is YGGGKEMDSSSHMEDTGEAREVA.

Homotrimer. Interacts with gp41 (via C-terminus). As to quaternary structure, homodimer. The active site consists of two apposed aspartic acid residues. In terms of assembly, heterodimer of p66 RT and p51 RT (RT p66/p51). Heterodimerization of RT is essential for DNA polymerase activity. Despite the sequence identities, p66 RT and p51 RT have distinct folding. Homotetramer; may further associate as a homohexadecamer. Mg(2+) is required as a cofactor. Specific enzymatic cleavages by the viral protease yield mature proteins. The protease is released by autocatalytic cleavage. The polyprotein is cleaved during and after budding, this process is termed maturation. Proteolytic cleavage of p66 RT removes the RNase H domain to yield the p51 RT subunit. Post-translationally, capsid protein p24 is phosphorylated.

Its subcellular location is the virion. It localises to the host nucleus. It is found in the host cytoplasm. The protein localises to the host cell membrane. The catalysed reaction is Specific for a P1 residue that is hydrophobic, and P1' variable, but often Pro.. The enzyme catalyses Endohydrolysis of RNA in RNA/DNA hybrids. Three different cleavage modes: 1. sequence-specific internal cleavage of RNA. Human immunodeficiency virus type 1 and Moloney murine leukemia virus enzymes prefer to cleave the RNA strand one nucleotide away from the RNA-DNA junction. 2. RNA 5'-end directed cleavage 13-19 nucleotides from the RNA end. 3. DNA 3'-end directed cleavage 15-20 nucleotides away from the primer terminus.. It catalyses the reaction 3'-end directed exonucleolytic cleavage of viral RNA-DNA hybrid.. It carries out the reaction DNA(n) + a 2'-deoxyribonucleoside 5'-triphosphate = DNA(n+1) + diphosphate. With respect to regulation, the viral protease is inhibited by many synthetic protease inhibitors (PIs), such as amprenavir, atazanavir, indinavir, loprinavir, nelfinavir, ritonavir and saquinavir. RT can be inhibited either by nucleoside RT inhibitors (NRTIs) or by non nucleoside RT inhibitors (NNRTIs). NRTIs act as chain terminators, whereas NNRTIs inhibit DNA polymerization by binding a small hydrophobic pocket near the RT active site and inducing an allosteric change in this region. Classical NRTIs are abacavir, adefovir (PMEA), didanosine (ddI), lamivudine (3TC), stavudine (d4T), tenofovir (PMPA), zalcitabine (ddC), and zidovudine (AZT). Classical NNRTIs are atevirdine (BHAP U-87201E), delavirdine, efavirenz (DMP-266), emivirine (I-EBU), and nevirapine (BI-RG-587). The tritherapies used as a basic effective treatment of AIDS associate two NRTIs and one NNRTI. Use of protease inhibitors in tritherapy regimens permit more ambitious therapeutic strategies. In terms of biological role, gag-Pol polyprotein and Gag polyprotein may regulate their own translation, by the binding genomic RNA in the 5'-UTR. At low concentration, Gag-Pol and Gag would promote translation, whereas at high concentration, the polyproteins encapsidate genomic RNA and then shut off translation. Functionally, matrix protein p17 has two main functions: in infected cell, it targets Gag and Gag-pol polyproteins to the plasma membrane via a multipartite membrane-binding signal, that includes its myristointegration complex. The myristoylation signal and the NLS exert conflicting influences its subcellular localization. The key regulation of these motifs might be phosphorylation of a portion of MA molecules on the C-terminal tyrosine at the time of virus maturation, by virion-associated cellular tyrosine kinase. Implicated in the release from host cell mediated by Vpu. Capsid protein p24 forms the conical core that encapsulates the genomic RNA-nucleocapsid complex in the virion. The core is constituted by capsid protein hexamer subunits. The core is disassembled soon after virion entry. Interaction with host PPIA/CYPA protects the virus from restriction by host TRIM5-alpha and from an unknown antiviral activity in host cells. This capsid restriction by TRIM5 is one of the factors which restricts SIV to the simian species. Its function is as follows. Nucleocapsid protein p7 encapsulates and protects viral dimeric unspliced (genomic) RNA. Binds these RNAs through its zinc fingers. Facilitates rearangement of nucleic acid secondary structure during retrotranscription of genomic RNA. This capability is referred to as nucleic acid chaperone activity. In terms of biological role, the aspartyl protease mediates proteolytic cleavages of Gag and Gag-Pol polyproteins during or shortly after the release of the virion from the plasma membrane. Cleavages take place as an ordered, step-wise cascade to yield mature proteins. This process is called maturation. Displays maximal activity during the budding process just prior to particle release from the cell. Also cleaves Nef and Vif, probably concomitantly with viral structural proteins on maturation of virus particles. Hydrolyzes host EIF4GI and PABP1 in order to shut off the capped cellular mRNA translation. The resulting inhibition of cellular protein synthesis serves to ensure maximal viral gene expression and to evade host immune response. Functionally, reverse transcriptase/ribonuclease H (RT) is a multifunctional enzyme that converts the viral dimeric RNA genome into dsDNA in the cytoplasm, shortly after virus entry into the cell. This enzyme displays a DNA polymerase activity that can copy either DNA or RNA templates, and a ribonuclease H (RNase H) activity that cleaves the RNA strand of RNA-DNA heteroduplexes in a partially processive 3' to 5' endonucleasic mode. Conversion of viral genomic RNA into dsDNA requires many steps. A tRNA binds to the primer-binding site (PBS) situated at the 5'-end of the viral RNA. RT uses the 3' end of the tRNA primer to perform a short round of RNA-dependent minus-strand DNA synthesis. The reading proceeds through the U5 region and ends after the repeated (R) region which is present at both ends of viral RNA. The portion of the RNA-DNA heteroduplex is digested by the RNase H, resulting in a ssDNA product attached to the tRNA primer. This ssDNA/tRNA hybridizes with the identical R region situated at the 3' end of viral RNA. This template exchange, known as minus-strand DNA strong stop transfer, can be either intra- or intermolecular. RT uses the 3' end of this newly synthesized short ssDNA to perform the RNA-dependent minus-strand DNA synthesis of the whole template. RNase H digests the RNA template except for two polypurine tracts (PPTs) situated at the 5'-end and near the center of the genome. It is not clear if both polymerase and RNase H activities are simultaneous. RNase H can probably proceed both in a polymerase-dependent (RNA cut into small fragments by the same RT performing DNA synthesis) and a polymerase-independent mode (cleavage of remaining RNA fragments by free RTs). Secondly, RT performs DNA-directed plus-strand DNA synthesis using the PPTs that have not been removed by RNase H as primers. PPTs and tRNA primers are then removed by RNase H. The 3' and 5' ssDNA PBS regions hybridize to form a circular dsDNA intermediate. Strand displacement synthesis by RT to the PBS and PPT ends produces a blunt ended, linear dsDNA copy of the viral genome that includes long terminal repeats (LTRs) at both ends. Integrase catalyzes viral DNA integration into the host chromosome, by performing a series of DNA cutting and joining reactions. This enzyme activity takes place after virion entry into a cell and reverse transcription of the RNA genome in dsDNA. The first step in the integration process is 3' processing. This step requires a complex comprising the viral genome, matrix protein, Vpr and integrase. This complex is called the pre-integration complex (PIC). The integrase protein removes 2 nucleotides from each 3' end of the viral DNA, leaving recessed CA OH's at the 3' ends. In the second step, the PIC enters cell nucleus. This process is mediated through integrase and Vpr proteins, and allows the virus to infect a non dividing cell. This ability to enter the nucleus is specific of lentiviruses, other retroviruses cannot and rely on cell division to access cell chromosomes. In the third step, termed strand transfer, the integrase protein joins the previously processed 3' ends to the 5' ends of strands of target cellular DNA at the site of integration. The 5'-ends are produced by integrase-catalyzed staggered cuts, 5 bp apart. A Y-shaped, gapped, recombination intermediate results, with the 5'-ends of the viral DNA strands and the 3' ends of target DNA strands remaining unjoined, flanking a gap of 5 bp. The last step is viral DNA integration into host chromosome. This involves host DNA repair synthesis in which the 5 bp gaps between the unjoined strands are filled in and then ligated. Since this process occurs at both cuts flanking the SIV genome, a 5 bp duplication of host DNA is produced at the ends of SIV integration. Alternatively, Integrase may catalyze the excision of viral DNA just after strand transfer, this is termed disintegration. The sequence is that of Gag-Pol polyprotein (gag-pol) from Cercopithecidae (Old World monkeys).